We begin with the raw amino-acid sequence, 252 residues long: Sensory transduction protein LytR (252 aa).

The Response regulatory domain maps to 2-116 (KALIVDDEPL…RINQAVNKVD (115 aa)). Residue aspartate 53 is modified to 4-aspartylphosphate. Positions 147-251 (LPIEVDERIH…MKTFKQQLGL (105 aa)) constitute an HTH LytTR-type domain.

Post-translationally, phosphorylated by LytS.

It is found in the cytoplasm. In terms of biological role, member of the two-component regulatory system LytR/LytS that probably regulates genes involved in cell wall metabolism. The polypeptide is Sensory transduction protein LytR (lytR) (Staphylococcus epidermidis (strain ATCC 12228 / FDA PCI 1200)).